A 272-amino-acid chain; its full sequence is HMP-PP phosphatase (272 aa).

Aspartate 8 (nucleophile) is an active-site residue. Residues aspartate 8, aspartate 10, and aspartate 212 each contribute to the Mg(2+) site.

It belongs to the HAD-like hydrolase superfamily. Cof family. It depends on Mg(2+) as a cofactor.

The catalysed reaction is 4-amino-2-methyl-5-(diphosphooxymethyl)pyrimidine + H2O = 4-amino-2-methyl-5-(phosphooxymethyl)pyrimidine + phosphate + H(+). Functionally, catalyzes the hydrolysis of 4-amino-2-methyl-5-hydroxymethylpyrimidine pyrophosphate (HMP-PP) to 4-amino-2-methyl-5-hydroxymethylpyrimidine phosphate (HMP-P). This chain is HMP-PP phosphatase, found in Escherichia coli (strain K12 / MC4100 / BW2952).